Reading from the N-terminus, the 266-residue chain is MEISTLQIIAIFIFSCIAGMGSVLDEFQTHRPLIACTVIGLILGDLKTGVMLGGTLELIALGWMNVGAAQSPDSALASIISAILVIVGHQSIAIGIAIALPVAAAGQVLTVFARTITVVFQHAADKAAEEARFRTIDLLHVSALGVQGLRVAIPALVVSLFVSADMVSSMLSAIPEFVTRGLQIAGGFIVVVGYAMVLRMMGVKYLMPFFFLGFLAGGYLDFSLLAFGGVGVIIALIYIQLNPQWRKAEPAASTAPSAPALDQLDD.

The PTS EIIC type-4 domain occupies 1 to 237; the sequence is MEISTLQIIA…GGVGVIIALI (237 aa). Helical transmembrane passes span 3-23, 33-53, 79-99, 100-120, 151-171, 183-203, and 219-239; these read ISTL…MGSV, LIAC…VMLG, IISA…IAIA, LPVA…TVVF, VAIP…SSML, QIAG…MMGV, and YLDF…LIYI.

It localises to the cell inner membrane. Its function is as follows. The phosphoenolpyruvate-dependent sugar phosphotransferase system (PTS), a major carbohydrate active transport system, catalyzes the phosphorylation of incoming sugar substrates concomitant with their translocation across the cell membrane. The enzyme II SorABFM PTS system is involved in L-sorbose transport. This Klebsiella pneumoniae protein is PTS system sorbose-specific EIIC component.